We begin with the raw amino-acid sequence, 95 residues long: Citrate lyase acyl carrier protein (95 aa).

O-(phosphoribosyl dephospho-coenzyme A)serine is present on Ser14.

It belongs to the CitD family. As to quaternary structure, oligomer with a subunit composition of (alpha,beta,gamma)6.

The protein localises to the cytoplasm. Covalent carrier of the coenzyme of citrate lyase. The protein is Citrate lyase acyl carrier protein of Haemophilus influenzae (strain 86-028NP).